The primary structure comprises 463 residues: Quinolone resistance protein NorB (463 aa).

14 helical membrane passes run 17–37, 53–73, 86–106, 107–127, 142–162, 165–185, 201–221, 230–250, 273–293, 299–319, 334–354, 357–377, 403–423, and 435–455; these read IGIVLSVITFWLFAQSLVNVV, IAVSITALFSGMFVVGAGGLA, IILNILGSLLIIISNIPLLLI, IGRLIQGLSAACIMPATLSII, YWSIGSWGGSGVCSFFGGAVA, LGWRWIFILSIIISLIALFLI, FDIKGLVLLVIMLLTLNILIT, SLLFITLLAIAIGSFSLFIVL, TASNFLLNGVAGTLIVANTFV, YSSLQAGSLSITYLVMVLIMI, PMLIGTGVLIVGECLISLTFL, ILYVICCIIGYLFFGLGLGIY, MASALGGAFGVALSGAVYAIV, and IALWLNAGMGILSFVIILLLV.

Belongs to the major facilitator superfamily. TCR/Tet family.

Its subcellular location is the cell membrane. Multidrug efflux pump that acts independently of NorA and is one of the factors that confers resistance against diverse quinolones and chemical compounds. This chain is Quinolone resistance protein NorB (norB), found in Staphylococcus aureus (strain Mu3 / ATCC 700698).